The chain runs to 276 residues: ESX-2 secretion-associated protein EspG2 (276 aa).

It belongs to the EspG family. Interacts specifically with ESX-2-dependent PE/PPE proteins.

It is found in the cytoplasm. Its function is as follows. Specific chaperone for cognate PE/PPE proteins. Plays an important role in preventing aggregation of PE/PPE dimers. The chain is ESX-2 secretion-associated protein EspG2 from Mycobacterium tuberculosis (strain CDC 1551 / Oshkosh).